We begin with the raw amino-acid sequence, 1129 residues long: Translation initiation factor IF-2 (1129 aa).

Composition is skewed to low complexity over residues 33-42 and 56-99; these read AARSHSSSIS and GGSP…AAKP. Disordered regions lie at residues 33–462 and 485–515; these read AARS…IGEN and SLAR…ETAR. The span at 100-112 shows a compositional bias: pro residues; that stretch reads SPKPSAPSRPEAP. Positions 135–147 are enriched in low complexity; that stretch reads STPAAAAPAAAPS. Residues 148–161 are compositionally biased toward pro residues; the sequence is APAPSAPTPRPKPT. A compositionally biased stretch (low complexity) spans 162–175; the sequence is APKASAPAPTASAP. Composition is skewed to pro residues over residues 176–191 and 211–221; these read SAPP…PAPA and PTAPPTRPQPK. The segment covering 257 to 273 has biased composition (low complexity); that stretch reads GQRPGVSPRPSGPPGQR. The span at 431 to 445 shows a compositional bias: basic and acidic residues; it reads GRPDWDDSAKLEALR. Composition is skewed to basic residues over residues 490–499 and 506–515; these read SKPRTKHKPA and IRKRRKETAR. In terms of domain architecture, tr-type G spans 621-793; sequence RRPPVVTVMG…ILLVTEVEDL (173 aa). The interval 630–637 is G1; it reads GHVDHGKT. 630 to 637 is a binding site for GTP; the sequence is GHVDHGKT. The G2 stretch occupies residues 655 to 659; sequence GITQH. The G3 stretch occupies residues 680–683; the sequence is DTPG. GTP contacts are provided by residues 680–684 and 734–737; these read DTPGH and NKID. The G4 stretch occupies residues 734–737; it reads NKID. Positions 770–772 are G5; that stretch reads SAL.

It belongs to the TRAFAC class translation factor GTPase superfamily. Classic translation factor GTPase family. IF-2 subfamily.

It is found in the cytoplasm. Its function is as follows. One of the essential components for the initiation of protein synthesis. Protects formylmethionyl-tRNA from spontaneous hydrolysis and promotes its binding to the 30S ribosomal subunits. Also involved in the hydrolysis of GTP during the formation of the 70S ribosomal complex. The polypeptide is Translation initiation factor IF-2 (Synechococcus sp. (strain CC9311)).